We begin with the raw amino-acid sequence, 499 residues long: Serine/threonine-protein kinase RHS3 (499 aa).

Residues 1–92 (MLLKPGNKLV…NSSKPHTGGD (92 aa)) form a disordered region. Residues 39–55 (QKQVEQNTKKIEEHQIK) are compositionally biased toward basic and acidic residues. The segment covering 63–85 (SNHNVNMSSQSNNSESTSTNNSS) has biased composition (low complexity). Residues 113–436 (FRVLKRLGYG…ATEIKQHPFF (324 aa)) form the Protein kinase domain. ATP contacts are provided by residues 119-127 (LGYGDIGSV) and Lys144. Asp240 functions as the Proton acceptor in the catalytic mechanism. Residues 437–499 (EGVNWALIRG…DPDYIVFEYF (63 aa)) enclose the AGC-kinase C-terminal domain.

It belongs to the protein kinase superfamily. AGC Ser/Thr protein kinase family. Interacts with PDPK1/PDK1. Post-translationally, autophosphorylated and phosphorylated by PDPK1/PDK1. As to expression, specifically expressed in root hair cells.

It carries out the reaction L-seryl-[protein] + ATP = O-phospho-L-seryl-[protein] + ADP + H(+). The catalysed reaction is L-threonyl-[protein] + ATP = O-phospho-L-threonyl-[protein] + ADP + H(+). With respect to regulation, activated by PDPK1/PDK1. Involved in root hair growth and morphogenesis. The chain is Serine/threonine-protein kinase RHS3 from Arabidopsis thaliana (Mouse-ear cress).